The sequence spans 306 residues: Curved DNA-binding protein (306 aa).

One can recognise a J domain in the interval 5-69 (DYYAIMGVKP…QRRAEYDQMW (65 aa)).

It is found in the cytoplasm. Its subcellular location is the nucleoid. DNA-binding protein that preferentially recognizes a curved DNA sequence. It is probably a functional analog of DnaJ; displays overlapping activities with DnaJ, but functions under different conditions, probably acting as a molecular chaperone in an adaptive response to environmental stresses other than heat shock. Lacks autonomous chaperone activity; binds native substrates and targets them for recognition by DnaK. Its activity is inhibited by the binding of CbpM. The protein is Curved DNA-binding protein of Escherichia coli O17:K52:H18 (strain UMN026 / ExPEC).